We begin with the raw amino-acid sequence, 495 residues long: Omega-crystallin (495 aa).

It belongs to the aldehyde dehydrogenase family. In terms of tissue distribution, lens.

In terms of biological role, omega-crystallins are structural components of squids and octopi eye lens. Contains relatively little if any DHAL activity. The sequence is that of Omega-crystallin from Nototodarus sloanii (Wellington flying squid).